The primary structure comprises 543 residues: Cysteine/serine-rich nuclear protein 2 (543 aa).

Met-1 carries the N-acetylmethionine modification. 3 disordered regions span residues 1-51, 281-305, and 488-543; these read MDAF…SFTP, KRQV…LTGA, and DCNP…PLAV. Low complexity predominate over residues 31–40; sequence SSDSADSCDS. Composition is skewed to polar residues over residues 42 to 51 and 296 to 305; these read NPPTTASFTP and PTASCSLTGA.

This sequence belongs to the AXUD1 family.

Its subcellular location is the nucleus. Binds to the consensus sequence 5'-AGAGTG-3' and has transcriptional activator activity. May play a role in apoptosis. The polypeptide is Cysteine/serine-rich nuclear protein 2 (CSRNP2) (Homo sapiens (Human)).